Reading from the N-terminus, the 518-residue chain is Ribonuclease Y (518 aa).

A helical transmembrane segment spans residues 2-22; it reads VLNILLAIVGLIVGLGLGFVI. Residues 91 to 119 form a disordered region; that stretch reads QREQTLDRKDDSLEKREGSLEEKEEKLGA. In terms of domain architecture, KH spans 208-268; that stretch reads TVSVVTLPND…IRREIARMTL (61 aa). Residues 334–427 enclose the HD domain; it reads VLNHSIEVAK…VAAADALSAA (94 aa).

This sequence belongs to the RNase Y family.

It is found in the cell membrane. Endoribonuclease that initiates mRNA decay. This is Ribonuclease Y from Enterococcus faecalis (strain ATCC 700802 / V583).